A 422-amino-acid chain; its full sequence is Dihydroorotase (422 aa).

The Zn(2+) site is built by His-53 and His-55. Residues 55 to 57 and Asn-87 each bind substrate; that span reads HFR. The Zn(2+) site is built by Glu-138, His-172, His-223, and Asp-291. Residue Asp-291 is part of the active site. Residue His-295 participates in substrate binding.

This sequence belongs to the metallo-dependent hydrolases superfamily. DHOase family. Class I DHOase subfamily. Zn(2+) is required as a cofactor.

The enzyme catalyses (S)-dihydroorotate + H2O = N-carbamoyl-L-aspartate + H(+). The protein operates within pyrimidine metabolism; UMP biosynthesis via de novo pathway; (S)-dihydroorotate from bicarbonate: step 3/3. Its function is as follows. Catalyzes the reversible cyclization of carbamoyl aspartate to dihydroorotate. In Halobacterium salinarum (strain ATCC 700922 / JCM 11081 / NRC-1) (Halobacterium halobium), this protein is Dihydroorotase.